An 85-amino-acid chain; its full sequence is MFCVIYRSVKRDQTYLYVEKKDDFSRVPEELMKSFGAPQLAMVLPLNGRKKLANADIEKVKLALQEQGFYLQVPPPVESLLTTPV.

A YcgL domain is found at 1–85; that stretch reads MFCVIYRSVK…PVESLLTTPV (85 aa).

In Pectobacterium atrosepticum (strain SCRI 1043 / ATCC BAA-672) (Erwinia carotovora subsp. atroseptica), this protein is YcgL domain-containing protein ECA2367.